Here is a 502-residue protein sequence, read N- to C-terminus: ATP synthase subunit alpha (502 aa).

ATP is bound at residue 169–176 (GDRQTGKT).

Belongs to the ATPase alpha/beta chains family. F-type ATPases have 2 components, CF(1) - the catalytic core - and CF(0) - the membrane proton channel. CF(1) has five subunits: alpha(3), beta(3), gamma(1), delta(1), epsilon(1). CF(0) has three main subunits: a(1), b(2) and c(9-12). The alpha and beta chains form an alternating ring which encloses part of the gamma chain. CF(1) is attached to CF(0) by a central stalk formed by the gamma and epsilon chains, while a peripheral stalk is formed by the delta and b chains.

The protein localises to the cell inner membrane. The catalysed reaction is ATP + H2O + 4 H(+)(in) = ADP + phosphate + 5 H(+)(out). Its function is as follows. Produces ATP from ADP in the presence of a proton gradient across the membrane. The alpha chain is a regulatory subunit. The sequence is that of ATP synthase subunit alpha from Kosmotoga olearia (strain ATCC BAA-1733 / DSM 21960 / TBF 19.5.1).